The following is a 644-amino-acid chain: MTHTRRIHILDPRLANQIAAGEVVERPASVVKELVENAIDAGSQRIEIDLESGGARLIRVRDDGRGIDQEDLPLALSRHATSKIASLDDLEGVDSLGFRGEALASISSVSRLELISNTHDEPSDGWRVVAEGRQMEPRVTPAPHPRGSSVVVRDLFFNTPARRKFLRTEKTEFGHVEEAFRRLALSRYDIGWILRHNQKVVHQLRAGDASTSMERRVGALLGRKFLENALHVDIEATGLRLWGWVGLPTHSRAQADQQYFFVNGRVVRDRLVAHAVRQAYRDVMFHGRHPVFVLYLELDPHVVDVNVHPTKHEVRFRDGRLVHDFLFSSLHRALADVRPNATSTEGGDEATPSTDATTATAAEASAGQAEPRWQQQGMALAAGQERERPAAHRVREFMAGYRALHPEHEASLLTPQPQEAAEEAAGTPAPPASSSPAMAETDDTQAPPLGYAVAQLHGVYILSQTERGLVVVDMHAAHERITYERMKQQVHGDGQALGRLQTQPLLVPVSIAASAREVETAENERATFERLGVELDVAGPETLLVRQVPVLLGNADVEALIHDMLGDLERFGRSDRLEVHINELLSSMACHGSVRANRRLTVPEMNALLRDMERTERSGQCNHGRPTWTEMSMHELDKLFLRGQ.

Disordered regions lie at residues 338 to 390 (RPNA…ERPA) and 416 to 445 (QPQE…DDTQ). 2 stretches are compositionally biased toward low complexity: residues 349–366 (EATP…EASA) and 416–427 (QPQEAAEEAAGT).

The protein belongs to the DNA mismatch repair MutL/HexB family.

In terms of biological role, this protein is involved in the repair of mismatches in DNA. It is required for dam-dependent methyl-directed DNA mismatch repair. May act as a 'molecular matchmaker', a protein that promotes the formation of a stable complex between two or more DNA-binding proteins in an ATP-dependent manner without itself being part of a final effector complex. The polypeptide is DNA mismatch repair protein MutL (Chromohalobacter salexigens (strain ATCC BAA-138 / DSM 3043 / CIP 106854 / NCIMB 13768 / 1H11)).